Here is a 78-residue protein sequence, read N- to C-terminus: uncharacterized protein (78 aa).

The segment covering 56 to 66 (ERANAGKRVSE) has biased composition (basic and acidic residues). The disordered stretch occupies residues 56 to 78 (ERANAGKRVSEEEQINGKRKRKD).

This is an uncharacterized protein from Saccharomyces cerevisiae (strain ATCC 204508 / S288c) (Baker's yeast).